Here is a 547-residue protein sequence, read N- to C-terminus: MAAKDVKFGRDARERILRGVDILADAVKVTLGPKGRNVVIDKSFGAPRITKDGVSVAKEIELKDKFENMGAQMLREVASKANDAAGDGTTTATVLAQAIVREGMTAVAAGMNPMDLKRGIDIAVGKVVENLKARSTPVAGSSEIAQVGIISANGDTEVGQKIAEAMEKVGKEGVITVEEAKGLEFELDVVEGMQFDRGYLSPYFITNPEKMTVELENPYILIHEKKLSSLQAMLPILEAVVQSGRPLLIIAEDIEGEALATLVVNKLRGGLKIAAVKAPGFGDRRKAMLGDIATLTAGEMISEDLGIKLESVTLAMLGQAKKVTIDKDNTTIVDGAGSAEEIKARVEQIRAQIEVTTSDYDREKLQERLAKLAGGVAVIKVGGATEVEVKERKDRVDDALHATRAAVEEGIVPGGGTALLYATKALEGLKGANDDQTKGIDIVRRAIQAPIRQIAANAGHDGAVVSGNLLRENDENQGFNAATDTYENLKAAGVIDPTKVVRTALQDAASVSGLLITTEAAISEKPDDKPAMPPMGGGMGGMGGMDF.

ATP-binding positions include 30 to 33, lysine 51, 87 to 91, glycine 415, 480 to 482, and aspartate 496; these read TLGP, DGTTT, and NAA. A disordered region spans residues 525-547; that stretch reads KPDDKPAMPPMGGGMGGMGGMDF. Residues 535-547 are compositionally biased toward gly residues; sequence MGGGMGGMGGMDF.

The protein belongs to the chaperonin (HSP60) family. Forms a cylinder of 14 subunits composed of two heptameric rings stacked back-to-back. Interacts with the co-chaperonin GroES.

It localises to the cytoplasm. The catalysed reaction is ATP + H2O + a folded polypeptide = ADP + phosphate + an unfolded polypeptide.. Together with its co-chaperonin GroES, plays an essential role in assisting protein folding. The GroEL-GroES system forms a nano-cage that allows encapsulation of the non-native substrate proteins and provides a physical environment optimized to promote and accelerate protein folding. In Novosphingobium aromaticivorans (strain ATCC 700278 / DSM 12444 / CCUG 56034 / CIP 105152 / NBRC 16084 / F199), this protein is Chaperonin GroEL.